The sequence spans 507 residues: L-amino-acid oxidase (507 aa).

A signal peptide spans 1–19 (MNVLFIFSLLFLAALESCA). C29 and C192 form a disulfide bridge. FAD-binding positions include 62-63 (MA), 82-83 (EA), R90, and 106-109 (GPMR). R109 contacts substrate. N191 and N213 each carry an N-linked (GlcNAc...) asparagine glycan. Residue V280 coordinates FAD. The cysteines at positions 348 and 429 are disulfide-linked. N378 carries N-linked (GlcNAc...) asparagine glycosylation. Position 389 (Y389) interacts with substrate. FAD is bound by residues E473 and 480-485 (GWIDST).

It belongs to the flavin monoamine oxidase family. FIG1 subfamily. In terms of assembly, homodimer; non-covalently linked. FAD serves as cofactor. Expressed by the venom gland.

It localises to the secreted. The enzyme catalyses an L-alpha-amino acid + O2 + H2O = a 2-oxocarboxylate + H2O2 + NH4(+). It carries out the reaction L-leucine + O2 + H2O = 4-methyl-2-oxopentanoate + H2O2 + NH4(+). Functionally, catalyzes an oxidative deamination of predominantly hydrophobic and aromatic L-amino acids, thus producing hydrogen peroxide that may contribute to the diverse toxic effects of this enzyme. Shows activity on L-Leu. Exhibits diverse biological activities, such as hemorrhage, hemolysis, edema, apoptosis of vascular endothelial cells or tumor cell lines, antibacterial and antiparasitic activities. This protein induces platelet aggregation by both hydrogen peroxide production and binding to platelet membrane proteins (that would enhance the sensitivity of platelets to hydrogen peroxide). Effects of snake L-amino oxidases on platelets are controversial, since they either induce aggregation or inhibit agonist-induced aggregation. These different effects are probably due to different experimental conditions. This chain is L-amino-acid oxidase, found in Naja atra (Chinese cobra).